The sequence spans 191 residues: Gamma-glutamylaminecyclotransferase B (191 aa).

Position 7-10 (7-10 (YGTL)) interacts with substrate. Glu-82 serves as the catalytic Proton acceptor. Polar residues predominate over residues 155 to 178 (SADFSQNSEQEIKKNNSLQILTST). The segment at 155–191 (SADFSQNSEQEIKKNNSLQILTSTGDDHDVNFRGPLQ) is disordered.

Belongs to the gamma-glutamylcyclotransferase family.

It carries out the reaction epsilon-(gamma-L-glutamyl)-L-lysine = 5-oxo-L-proline + L-lysine. In terms of biological role, may contribute to degradation of proteins cross-linked by transglutaminases by degrading the cross-link between a lysine and a glutamic acid residue. Catalyzes the formation of 5-oxo-L-proline from L-gamma-glutamyl-L-epsilon-lysine. The polypeptide is Gamma-glutamylaminecyclotransferase B (ggact.2) (Danio rerio (Zebrafish)).